The primary structure comprises 339 residues: uncharacterized protein (339 aa).

This is an uncharacterized protein from Treponema pallidum (strain Nichols).